The primary structure comprises 162 residues: Flagellar assembly factor FliW (162 aa).

The protein belongs to the FliW family. In terms of assembly, interacts with translational regulator CsrA and flagellin(s).

It localises to the cytoplasm. Functionally, acts as an anti-CsrA protein, binds CsrA and prevents it from repressing translation of its target genes, one of which is flagellin. Binds to flagellin and participates in the assembly of the flagellum. This chain is Flagellar assembly factor FliW, found in Magnetococcus marinus (strain ATCC BAA-1437 / JCM 17883 / MC-1).